Consider the following 188-residue polypeptide: dCTP deaminase (188 aa).

DCTP contacts are provided by residues 111–116 (KSTYAR), 135–137 (TLE), Q156, Y170, K179, and Q180. Catalysis depends on E137, which acts as the Proton donor/acceptor.

This sequence belongs to the dCTP deaminase family. As to quaternary structure, homotrimer.

The enzyme catalyses dCTP + H2O + H(+) = dUTP + NH4(+). It functions in the pathway pyrimidine metabolism; dUMP biosynthesis; dUMP from dCTP (dUTP route): step 1/2. Catalyzes the deamination of dCTP to dUTP. This chain is dCTP deaminase, found in Rickettsia akari (strain Hartford).